Consider the following 426-residue polypeptide: Serine--tRNA ligase (426 aa).

Residues R37–A63 form a disordered region. T233–E235 provides a ligand contact to L-serine. ATP is bound at residue R264–E266. Position 287 (E287) interacts with L-serine. E351 to S354 is a binding site for ATP. L-serine is bound at residue S387.

It belongs to the class-II aminoacyl-tRNA synthetase family. Type-1 seryl-tRNA synthetase subfamily. In terms of assembly, homodimer. The tRNA molecule binds across the dimer.

It is found in the cytoplasm. It carries out the reaction tRNA(Ser) + L-serine + ATP = L-seryl-tRNA(Ser) + AMP + diphosphate + H(+). The enzyme catalyses tRNA(Sec) + L-serine + ATP = L-seryl-tRNA(Sec) + AMP + diphosphate + H(+). It functions in the pathway aminoacyl-tRNA biosynthesis; selenocysteinyl-tRNA(Sec) biosynthesis; L-seryl-tRNA(Sec) from L-serine and tRNA(Sec): step 1/1. Its function is as follows. Catalyzes the attachment of serine to tRNA(Ser). Is also able to aminoacylate tRNA(Sec) with serine, to form the misacylated tRNA L-seryl-tRNA(Sec), which will be further converted into selenocysteinyl-tRNA(Sec). This is Serine--tRNA ligase from Pseudomonas entomophila (strain L48).